Consider the following 613-residue polypeptide: DNA polymerase II small subunit (613 aa).

This sequence belongs to the DNA polymerase delta/II small subunit family. As to quaternary structure, heterodimer of a large subunit and a small subunit.

The enzyme catalyses DNA(n) + a 2'-deoxyribonucleoside 5'-triphosphate = DNA(n+1) + diphosphate. It catalyses the reaction Exonucleolytic cleavage in the 3'- to 5'-direction to yield nucleoside 5'-phosphates.. Functionally, possesses two activities: a DNA synthesis (polymerase) and an exonucleolytic activity that degrades single-stranded DNA in the 3' to 5' direction. Has a template-primer preference which is characteristic of a replicative DNA polymerase. In Pyrococcus furiosus (strain ATCC 43587 / DSM 3638 / JCM 8422 / Vc1), this protein is DNA polymerase II small subunit (polB).